The chain runs to 196 residues: Lipoprotein signal peptidase (196 aa).

2 helical membrane-spanning segments follow: residues 75-95 and 97-117; these read IVFL…MMSS and TIGG…NLID. Residues Asp-126 and Asp-144 contribute to the active site. The helical transmembrane segment at 135–155 threads the bilayer; the sequence is YSFPVFNLADCFITLGVIILV.

The protein belongs to the peptidase A8 family.

The protein localises to the cell inner membrane. The catalysed reaction is Release of signal peptides from bacterial membrane prolipoproteins. Hydrolyzes -Xaa-Yaa-Zaa-|-(S,diacylglyceryl)Cys-, in which Xaa is hydrophobic (preferably Leu), and Yaa (Ala or Ser) and Zaa (Gly or Ala) have small, neutral side chains.. It participates in protein modification; lipoprotein biosynthesis (signal peptide cleavage). Functionally, this protein specifically catalyzes the removal of signal peptides from prolipoproteins. The protein is Lipoprotein signal peptidase of Rickettsia bellii (strain OSU 85-389).